Reading from the N-terminus, the 1079-residue chain is Tudor domain-containing protein 7A (1079 aa).

One can recognise an HTH OST-type 1 domain in the interval 3 to 76; it reads DVELVKKMLR…TGEVMCFAGV (74 aa). A disordered region spans residues 153–175; that stretch reads LPSSRAPAWQMNRKSPVPEKTSV. HTH OST-type domains follow at residues 205-270 and 366-434; these read DVEL…RLVY and LTTE…ILYT. 2 Tudor domains span residues 519 to 576 and 708 to 765; these read SPKI…FMTL and RPFC…FLKE.

It belongs to the TDRD7 family.

The protein resides in the cytoplasm. In terms of biological role, component of specific cytoplasmic RNA granules involved in post-transcriptional regulation of specific genes: probably acts by binding to specific mRNAs and regulating their translation. Probably required during spermatogenesis. Required for structural integrity of granules in primordial germ cells (PGCs). This chain is Tudor domain-containing protein 7A (tdrd7a), found in Danio rerio (Zebrafish).